The following is a 343-amino-acid chain: Multidrug resistance protein MdtN (343 aa).

The Cytoplasmic portion of the chain corresponds to Met1–Lys12. The chain crosses the membrane as a helical; Signal-anchor for type II membrane protein span at residues Phe13 to Val33. The Periplasmic portion of the chain corresponds to Asp34–Gln343.

This sequence belongs to the membrane fusion protein (MFP) (TC 8.A.1) family. As to quaternary structure, could be part of a tripartite efflux system composed of MdtN, MdtO and MdtP.

It localises to the cell inner membrane. Its function is as follows. Could be involved in resistance to puromycin, acriflavine and tetraphenylarsonium chloride. The chain is Multidrug resistance protein MdtN (mdtN) from Escherichia coli O6:H1 (strain CFT073 / ATCC 700928 / UPEC).